Reading from the N-terminus, the 420-residue chain is CinA-like protein (420 aa).

This sequence belongs to the CinA family.

This Syntrophus aciditrophicus (strain SB) protein is CinA-like protein.